We begin with the raw amino-acid sequence, 95 residues long: Progonadoliberin-1 (95 aa).

Positions 1–22 (MAPQTFALWLLLVGTLLGQGCC) are cleaved as a signal peptide. Glutamine 23 bears the Pyrrolidone carboxylic acid mark. Residue glycine 32 is modified to Glycine amide.

It belongs to the GnRH family.

The protein resides in the secreted. Stimulates the secretion of gonadotropins. This Morone saxatilis (Striped bass) protein is Progonadoliberin-1 (gnrh1).